The primary structure comprises 165 residues: Large ribosomal subunit protein uL11 (165 aa).

The residue at position 38 (Ser38) is a Phosphoserine. Residue Lys40 forms a Glycyl lysine isopeptide (Lys-Gly) (interchain with G-Cter in SUMO2) linkage. Lys48 participates in a covalent cross-link: Glycyl lysine isopeptide (Lys-Gly) (interchain with G-Cter in ubiquitin). Lys54 bears the N6-acetyllysine mark. Lys83 is covalently cross-linked (Glycyl lysine isopeptide (Lys-Gly) (interchain with G-Cter in ubiquitin)). Ser165 is modified (phosphoserine).

The protein belongs to the universal ribosomal protein uL11 family. In terms of assembly, component of the large ribosomal subunit. Mature ribosomes consist of a small (40S) and a large (60S) subunit. The 40S subunit contains about 33 different proteins and 1 molecule of RNA (18S). The 60S subunit contains about 49 different proteins and 3 molecules of RNA (28S, 5.8S and 5S). Ubiquitinated at Lys-48 and Lys-83 by RNF14 and RNF25 in response to ribosome collisions (ribosome stalling).

It localises to the cytoplasm. Its function is as follows. Component of the large ribosomal subunit. The ribosome is a large ribonucleoprotein complex responsible for the synthesis of proteins in the cell. Binds directly to 26S ribosomal RNA. The sequence is that of Large ribosomal subunit protein uL11 (Rpl12) from Mus musculus (Mouse).